Reading from the N-terminus, the 539-residue chain is Berberine bridge enzyme-like 21 (539 aa).

Residues 1–26 form the signal peptide; it reads MIATQTFVSVFFFVFFLVSLPFFSSA. The cysteines at positions 41 and 104 are disulfide-linked. Asparagine 79 carries an N-linked (GlcNAc...) asparagine glycan. One can recognise an FAD-binding PCMH-type domain in the interval 82-256; sequence STPKPAIIVT…LGYKVKLVPV (175 aa). A cross-link (6-(S-cysteinyl)-8alpha-(pros-histidyl)-FAD (His-Cys)) is located at residues 119-181; sequence HDYEGLSYIS…KVHGFPAGVC (63 aa). Asparagine 340 is a glycosylation site (N-linked (GlcNAc...) asparagine).

It belongs to the oxygen-dependent FAD-linked oxidoreductase family. The cofactor is FAD. The FAD cofactor is bound via a bicovalent 6-S-cysteinyl, 8alpha-N1-histidyl FAD linkage.

The protein resides in the secreted. The protein localises to the cell wall. The sequence is that of Berberine bridge enzyme-like 21 from Arabidopsis thaliana (Mouse-ear cress).